The primary structure comprises 807 residues: Lysyl oxidase homolog 3B (807 aa).

Positions 1–24 (MELHQWCRHIIVFLLNVWIPSCFA) are cleaved as a signal peptide. 5 SRCR domains span residues 49-150 (FRLS…VICK), 175-288 (VRLR…VSCV), 309-409 (TRLK…VRCN), 419-470 (VRIL…LGYA), and 476-579 (VRLS…VICS). Intrachain disulfides connect Cys-75–Cys-139, Cys-88–Cys-149, Cys-119–Cys-129, Cys-207–Cys-277, Cys-220–Cys-287, Cys-254–Cys-264, Cys-334–Cys-398, Cys-347–Cys-408, and Cys-378–Cys-388. Asn-272 carries N-linked (GlcNAc...) asparagine glycosylation. Asn-392 is a glycosylation site (N-linked (GlcNAc...) asparagine). 2 disulfides stabilise this stretch: Cys-514/Cys-578 and Cys-547/Cys-557. N-linked (GlcNAc...) asparagine glycosylation occurs at Asn-536. Residue Asn-679 is glycosylated (N-linked (GlcNAc...) asparagine). The lysine tyrosylquinone (Lys-Tyr) cross-link spans 688 to 724 (KASFCLEDTDCDEGVSKRYKCANFGEQGITVGCWDLY). At Tyr-724 the chain carries 2',4',5'-topaquinone.

Belongs to the lysyl oxidase family. It depends on Cu cation as a cofactor. Requires lysine tyrosylquinone residue as cofactor. In terms of processing, the lysine tyrosylquinone cross-link (LTQ) is generated by condensation of the epsilon-amino group of a lysine with a topaquinone produced by oxidation of tyrosine.

The protein localises to the secreted. The protein resides in the extracellular space. It is found in the cytoplasm. It localises to the nucleus. It catalyses the reaction L-lysyl-[protein] + O2 + H2O = (S)-2-amino-6-oxohexanoyl-[protein] + H2O2 + NH4(+). The catalysed reaction is N(6)-acetyl-L-lysyl-[protein] + O2 + H2O = acetamide + (S)-2-amino-6-oxohexanoyl-[protein] + H2O2. Functionally, protein-lysine 6-oxidase that mediates the oxidation of peptidyl lysine residues to allysine in target proteins. Catalyzes the post-translational oxidative deamination of peptidyl lysine residues in precursors of elastin and different types of collagens, a prerequisite in the formation of cross-links between collagens and elastin. Can mediate oxidation of lysine residues that are acetylated. Also able to catalyze deacetylation of lysine residues. Required for maturation of neural crest derived cartilage elements. In Danio rerio (Zebrafish), this protein is Lysyl oxidase homolog 3B.